A 438-amino-acid chain; its full sequence is tRNA wybutosine-synthesizing protein 2 homolog (438 aa).

S-adenosyl-L-methionine contacts are provided by residues serine 209, lysine 216, glutamate 256, and 284-285 (DN).

The protein belongs to the class I-like SAM-binding methyltransferase superfamily. TRM5/TYW2 family.

It catalyses the reaction 4-demethylwyosine(37) in tRNA(Phe) + S-adenosyl-L-methionine = 4-demethyl-7-[(3S)-3-amino-3-carboxypropyl]wyosine(37) in tRNA(Phe) + S-methyl-5'-thioadenosine + H(+). It participates in tRNA modification; wybutosine-tRNA(Phe) biosynthesis. Its function is as follows. S-adenosyl-L-methionine-dependent transferase that acts as a component of the wybutosine biosynthesis pathway. Wybutosine is a hyper modified guanosine with a tricyclic base found at the 3'-position adjacent to the anticodon of eukaryotic phenylalanine tRNA. Catalyzes the transfer of the alpha-amino-alpha-carboxypropyl (acp) group from S-adenosyl-L-methionine to the C-7 position of 4-demethylwyosine (imG-14) to produce wybutosine-86. The polypeptide is tRNA wybutosine-synthesizing protein 2 homolog (TRMT12) (Bos taurus (Bovine)).